Here is a 190-residue protein sequence, read N- to C-terminus: MSADAPEPGPGQSPGERASGGPEPSGVDLARVALRAAREAARARGDAAQQKKQARRGGLRSGARADGRDPMALGSAINRLITERGWETPAAVGGVMGRWPEIVGADVAKHCVPERYDEDERVLVVRCDSTAWATNLRLLAPTLVARLNEDLGHGSVRMIKVLGPGGPGGPGRRYGPLRAPGSQGPGDTYG.

Disordered regions lie at residues 1–70 and 163–190; these read MSAD…GRDP and GPGGPGGPGRRYGPLRAPGSQGPGDTYG. Residues 26 to 35 show a composition bias toward low complexity; the sequence is GVDLARVALR. Residues 36-45 show a composition bias toward basic and acidic residues; that stretch reads AAREAARARG. The span at 163–172 shows a compositional bias: gly residues; the sequence is GPGGPGGPGR.

It belongs to the UPF0232 family.

In Streptomyces coelicolor (strain ATCC BAA-471 / A3(2) / M145), this protein is UPF0232 protein SCO3875.